The primary structure comprises 456 residues: Dothistromin biosynthesis regulatory protein aflJ (456 aa).

Positions 74-143 (LARENQLLAC…PKPGYVAHSG (70 aa)) constitute an HTH iclR-type domain. Positions 104 to 123 (YSDVADLACVPVDQLRRIAR) form a DNA-binding region, H-T-H motif. The segment covering 290–300 (KLHNGLSTPPE) has biased composition (polar residues). The tract at residues 290-314 (KLHNGLSTPPESDTGPAARAAKASE) is disordered.

The protein localises to the nucleus. Its function is as follows. Transcription coactivator involved in regulation of the dothistromin biosynthesis gene cluster with aflR. The protein is Dothistromin biosynthesis regulatory protein aflJ of Dothistroma septosporum (strain NZE10 / CBS 128990) (Red band needle blight fungus).